The sequence spans 357 residues: 39 kDa FK506-binding nuclear protein (357 aa).

Ser-92 carries the post-translational modification Phosphoserine. A disordered region spans residues 113–251 (KNSKKSEDDE…ASKDPRTITG (139 aa)). Residues 120–182 (DDEDENESGE…QDSDDSEAEE (63 aa)) show a composition bias toward acidic residues. A phosphoserine mark is found at Ser-193 and Ser-197. A compositionally biased stretch (basic and acidic residues) spans 222-237 (EKPEAKKEQPKAKEPA). The region spanning 269-357 (GKRVSVYYIG…VFEVELKAVH (89 aa)) is the PPIase FKBP-type domain.

This sequence belongs to the FKBP-type PPIase family. Ubiquitously expressed, highest levels in ovary.

Its subcellular location is the nucleus. It catalyses the reaction [protein]-peptidylproline (omega=180) = [protein]-peptidylproline (omega=0). Functionally, PPIases accelerate the folding of proteins. May function in a signal transduction cascade during early development. The sequence is that of 39 kDa FK506-binding nuclear protein from Drosophila melanogaster (Fruit fly).